Here is a 127-residue protein sequence, read N- to C-terminus: uncharacterized protein (127 aa).

Positions 69-94 (GDGGSVPEKGKHGILGAQGQEHPGLN) are disordered.

This is an uncharacterized protein from Homo sapiens (Human).